The following is a 343-amino-acid chain: Allantoicase (343 aa).

This sequence belongs to the allantoicase family.

The enzyme catalyses allantoate + H2O = (S)-ureidoglycolate + urea. The protein operates within nitrogen metabolism; (S)-allantoin degradation; (S)-ureidoglycolate from allantoate (aminidohydrolase route): step 1/1. In terms of biological role, utilization of purines as secondary nitrogen sources, when primary sources are limiting. The chain is Allantoicase (DAL2) from Saccharomyces cerevisiae (strain ATCC 204508 / S288c) (Baker's yeast).